The sequence spans 225 residues: Insulin-induced gene 2 protein (225 aa).

Residues 1–28 (MAEGETKSPGPKKCGPYISSVTSQSVNL) are Cytoplasmic-facing. The chain crosses the membrane as a helical span at residues 29–51 (MIRGVVLFFIGVFLALVLNLLQI). Topologically, residues 52-70 (QRNVTLFPPDVIASIFSSA) are lumenal. Residues 71–88 (WWVPPCCGTASAVIGLLY) traverse the membrane as a helical segment. The Cytoplasmic portion of the chain corresponds to 89 to 103 (PCIDRHLGEPHKFKR). The helical transmembrane segment at 104-126 (EWSSVMRCVAVFVGINHASAKVD) threads the bilayer. Over 127-129 (FDN) the chain is Lumenal. Residues 130–148 (NIQLSLTLAALSIGLWWTF) form a helical membrane-spanning segment. Residues 149 to 153 (DRSRS) lie on the Cytoplasmic side of the membrane. A Phosphoserine modification is found at Ser151. The chain crosses the membrane as a helical span at residues 154–175 (GFGLGVGIAFLATLVTQLLVYN). The Lumenal portion of the chain corresponds to 176–189 (GVYQYTSPDFLYVR). The helical transmembrane segment at 190–207 (SWLPCIFFAGGITMGNIG) threads the bilayer. At 208–225 (RQLAMYECKVIAEKSHQE) the chain is on the cytoplasmic side. Cys215 is modified (cysteine sulfenic acid (-SOH); alternate). Cys215 is covalently cross-linked (Glycyl cysteine thioester (Cys-Gly) (interchain with G-Cter in ubiquitin); alternate). Positions 219 to 225 (AEKSHQE) match the KxHxx motif.

It belongs to the INSIG family. Interacts with SCAP; interaction is direct and only takes place in the presence of sterols; it prevents interaction between SCAP and the coat protein complex II (COPII). Associates with the SCAP-SREBP complex (composed of SCAP and SREBF1/SREBP1 or SREBF2/SREBP2); association is mediated via its interaction with SCAP and only takes place in the presence of sterols. Interacts with RNF139. Interacts with RNF145. Phosphorylation at Ser-151 by PCK1 reduces binding to oxysterol, disrupting the interaction between INSIG2 and SCAP, thereby promoting nuclear translocation of SREBP proteins (SREBF1/SREBP1 or SREBF2/SREBP2) and subsequent transcription of downstream lipogenesis-related genes. Post-translationally, polyubiquitinated by AMFR/gp78 at Cys-215 in some tissues such as adipose tissues, undifferentiated myoblasts and liver, leading to its degradation. In differentiated myotubes, Cys-215 oxidation prevents ubiquitination at the same site, resulting in protein stabilization. In terms of processing, oxidized at Cys-215 in differentiated myotubes, preventing ubiquitination at the same site, and resulting in protein stabilization.

The protein localises to the endoplasmic reticulum membrane. Its function is as follows. Oxysterol-binding protein that mediates feedback control of cholesterol synthesis by controlling both endoplasmic reticulum to Golgi transport of SCAP and degradation of HMGCR. Acts as a negative regulator of cholesterol biosynthesis by mediating the retention of the SCAP-SREBP complex in the endoplasmic reticulum, thereby blocking the processing of sterol regulatory element-binding proteins (SREBPs) SREBF1/SREBP1 and SREBF2/SREBP2. Binds oxysterol, including 22-hydroxycholesterol, 24-hydroxycholesterol, 25-hydroxycholesterol and 27-hydroxycholesterol, regulating interaction with SCAP and retention of the SCAP-SREBP complex in the endoplasmic reticulum. In presence of oxysterol, interacts with SCAP, retaining the SCAP-SREBP complex in the endoplasmic reticulum, thereby preventing SCAP from escorting SREBF1/SREBP1 and SREBF2/SREBP2 to the Golgi. Sterol deprivation or phosphorylation by PCK1 reduce oxysterol-binding, disrupting the interaction between INSIG2 and SCAP, thereby promoting Golgi transport of the SCAP-SREBP complex, followed by processing and nuclear translocation of SREBF1/SREBP1 and SREBF2/SREBP2. Also regulates cholesterol synthesis by regulating degradation of HMGCR: initiates the sterol-mediated ubiquitin-mediated endoplasmic reticulum-associated degradation (ERAD) of HMGCR via recruitment of the reductase to the ubiquitin ligase RNF139. In Sus scrofa (Pig), this protein is Insulin-induced gene 2 protein.